The chain runs to 336 residues: Probable G-protein coupled receptor 160 (336 aa).

Topologically, residues Met-1–Ser-21 are extracellular. Asn-8 carries an N-linked (GlcNAc...) asparagine glycan. The helical transmembrane segment at Leu-22 to Ile-42 threads the bilayer. The Cytoplasmic portion of the chain corresponds to Leu-43–Glu-56. A helical transmembrane segment spans residues Tyr-57–Thr-77. Residues Tyr-78–Cys-95 are Extracellular-facing. Residues Leu-96–Ala-116 traverse the membrane as a helical segment. The Cytoplasmic portion of the chain corresponds to Cys-117–Lys-136. A helical transmembrane segment spans residues Leu-137–Asp-157. The Extracellular segment spans residues Pro-158 to Leu-187. The helical transmembrane segment at Ser-188–Ile-208 threads the bilayer. Topologically, residues Gln-209–Arg-243 are cytoplasmic. Residues Leu-244–Ser-264 traverse the membrane as a helical segment. The Extracellular segment spans residues Leu-265 to Tyr-272. Residues Ile-273 to Trp-293 traverse the membrane as a helical segment. Over Phe-294–Cys-336 the chain is Cytoplasmic.

Belongs to the G-protein coupled receptor 1 family.

The protein resides in the cell membrane. In terms of biological role, orphan receptor. This is Probable G-protein coupled receptor 160 (Gpr160) from Rattus norvegicus (Rat).